Here is a 431-residue protein sequence, read N- to C-terminus: Extensin-3 (431 aa).

Residues 1-27 (MGSPMASLVATLLVLTISLTFVSQSTA) form the signal peptide. A run of 3 repeats spans residues 33 to 41 (SPPPPVKHY), 49 to 55 (SPPPVYH), and 56 to 63 (SPPPPKKH). The interval 33 to 384 (SPPPPVKHYT…KSPPPPVKHY (352 aa)) is 13 X 9 AA repeats of S-P-P-P-P-V-K-H-Y. The segment at 42 to 408 (TPPVKHYSPP…KYVYKSPPPP (367 aa)) is disordered. Residues 49-59 (SPPPVYHSPPP) show a composition bias toward pro residues. Residues 49-391 (SPPPVYHSPP…KHYSPPPVYH (343 aa)) are 13 X 7 AA repeats of S-P-P-P-V-Y-H. A 12 X 8 AA repeats of S-P-P-P-P-K-K-H region spans residues 56–371 (SPPPPKKHYE…YHSPPPPKKH (316 aa)). Positions 64-67 (YEYK) are isodityrosine cross-linking. 3 repeat units span residues 68 to 76 (SPPPPVKHY), 77 to 83 (SPPPVYH), and 84 to 91 (SPPPPKKH). A compositionally biased stretch (pro residues) spans 68–87 (SPPPPVKHYSPPPVYHSPPP). The tract at residues 92–95 (YVYK) is isodityrosine cross-linking. 3 repeat units span residues 96–104 (SPPPPVKHY), 105–111 (SPPPVYH), and 112–119 (SPPPPKKH). A compositionally biased stretch (pro residues) spans 96–115 (SPPPPVKHYSPPPVYHSPPP). Residues 120–123 (YVYK) are isodityrosine cross-linking. A run of 3 repeats spans residues 124 to 132 (SPPPPVKHY), 133 to 139 (SPPPVYH), and 140 to 147 (SPPPPKKH). Residues 124–143 (SPPPPVKHYSPPPVYHSPPP) show a composition bias toward pro residues. Residues 148–151 (YVYK) form an isodityrosine cross-linking region. 3 tandem repeats follow at residues 152–160 (SPPPPVKHY), 161–167 (SPPPVYH), and 168–175 (SPPPPKKH). Pro residues predominate over residues 152 to 171 (SPPPPVKHYSPPPVYHSPPP). The segment at 176–179 (YVYK) is isodityrosine cross-linking. Tandem repeats lie at residues 180-188 (SPPPPVKHY), 189-195 (SPPPVYH), and 196-203 (SPPPPKKH). The span at 180-199 (SPPPPVKHYSPPPVYHSPPP) shows a compositional bias: pro residues. The isodityrosine cross-linking stretch occupies residues 204–207 (YVYK). Repeat copies occupy residues 208–216 (SPPPPVKHY), 217–223 (SPPPVYH), and 224–231 (SPPPPKKH). The span at 208–227 (SPPPPVKHYSPPPVYHSPPP) shows a compositional bias: pro residues. The segment at 232 to 235 (YVYK) is isodityrosine cross-linking. A run of 3 repeats spans residues 236 to 244 (SPPPPVKHY), 245 to 251 (SPPPVYH), and 252 to 259 (SPPPPKKH). Pro residues predominate over residues 236 to 255 (SPPPPVKHYSPPPVYHSPPP). The segment at 260 to 263 (YVYK) is isodityrosine cross-linking. 3 tandem repeats follow at residues 264 to 272 (SPPPPVKHY), 273 to 279 (SPPPVYH), and 280 to 287 (SPPPPKKH). Over residues 264–283 (SPPPPVKHYSPPPVYHSPPP) the composition is skewed to pro residues. Residues 288–291 (YVYK) form an isodityrosine cross-linking region. Tandem repeats lie at residues 292-300 (SPPPPVKHY), 301-307 (SPPPVYH), and 308-315 (SPPPPKKH). Pro residues predominate over residues 292-311 (SPPPPVKHYSPPPVYHSPPP). The tract at residues 316 to 319 (YVYK) is isodityrosine cross-linking. A run of 3 repeats spans residues 320-328 (SPPPPVKHY), 329-335 (SPPPVYH), and 336-343 (SPPPPKKH). The segment covering 320 to 339 (SPPPPVKHYSPPPVYHSPPP) has biased composition (pro residues). The interval 344–347 (YVYK) is isodityrosine cross-linking. 3 tandem repeats follow at residues 348 to 356 (SPPPPVKHY), 357 to 363 (SPPPVYH), and 364 to 371 (SPPPPKKH). A compositionally biased stretch (pro residues) spans 348-367 (SPPPPVKHYSPPPVYHSPPP). The segment at 372 to 375 (YVYK) is isodityrosine cross-linking. 2 repeat units span residues 376–384 (SPPPPVKHY) and 385–391 (SPPPVYH). A compositionally biased stretch (pro residues) spans 376–395 (SPPPPVKHYSPPPVYHSPPP). Isodityrosine cross-linking stretches follow at residues 400–403 (YVYK) and 420–423 (YLYK).

Belongs to the extensin family. In terms of processing, the proline residues of the Ser-Pro(3) repeats are hydroxylated and then O-glycosylated (arabinosylation) by HPAT1, HPAT2 and HPAT3. Around 20% of Hyp units are in the nonglycosylated form. The Ser residues are O-galactosylated. The lack of Ser-O-galactosylation does not affect Hyp-O-arabinosylation, but both types of O-glycosylation are central for the functionality of the protein. Correct Hyp-O-arabinosylation appears to be responsible for generating a bend on the EXT3 backbone around a YVY motif, which may represent a better scenario for Tyr intramolecular cross-links (isodityrosine type). Post-translationally, synthetised as soluble proteins which become insolubilised in the cell wall through the intermolecular cross-linking of Tyr on adjacent monomers. Isodityrosine (IDT) stabilizes and makes rigid the part of the polypeptide where IDT functional sites are present. Predominantly expressed in the roots.

It localises to the secreted. It is found in the primary cell wall. Its function is as follows. Structural component which strengthens the primary cell wall. Forms dendritic structures indicating a propensity for self-assembly through tyrosine cross-linking. Forms intermolecular cross-links exclusively by pulcherosine (three Tyr). Scaffold formation requires an unobstructed C-terminus of EXT3. Required for the correct positioning of the cell plate during cytokinesis in cells of the developing embryo. Extensins contain a characteristic repeat of the pentapeptide Ser-Pro(4). For this particular extensin, a typical repeat of Ser-Pro(3) is found. The sequence is that of Extensin-3 from Arabidopsis thaliana (Mouse-ear cress).